The sequence spans 336 residues: tRNA N6-adenosine threonylcarbamoyltransferase (336 aa).

Fe cation-binding residues include His114 and His118. Substrate-binding positions include 136–140 (LVSGG), Asp169, Gly182, Asp186, and Asn275. Residue Asp301 participates in Fe cation binding.

This sequence belongs to the KAE1 / TsaD family. The cofactor is Fe(2+).

It localises to the cytoplasm. It catalyses the reaction L-threonylcarbamoyladenylate + adenosine(37) in tRNA = N(6)-L-threonylcarbamoyladenosine(37) in tRNA + AMP + H(+). Required for the formation of a threonylcarbamoyl group on adenosine at position 37 (t(6)A37) in tRNAs that read codons beginning with adenine. Is involved in the transfer of the threonylcarbamoyl moiety of threonylcarbamoyl-AMP (TC-AMP) to the N6 group of A37, together with TsaE and TsaB. TsaD likely plays a direct catalytic role in this reaction. This is tRNA N6-adenosine threonylcarbamoyltransferase from Streptococcus pneumoniae serotype 19F (strain G54).